The chain runs to 143 residues: MDQTLSNFGNVFAFLALGVVFVAGGYLTARMLRPSRPNPAKNSTYECGEEAVGSAWVKFNIRFYVVALIFIIFDVEVVFLYPWATVFKQLGEFALIEALVFAGILVLGLAYAWVKGDLDWVRPTPNIPKMPEMPSGKSGALRG.

Helical transmembrane passes span 8-28, 63-83, and 93-113; these read FGNV…GYLT, FYVV…LYPW, and FALI…AYAW.

This sequence belongs to the complex I subunit 3 family. NDH-1 is composed of 14 different subunits. Subunits NuoA, H, J, K, L, M, N constitute the membrane sector of the complex.

The protein localises to the cell inner membrane. The catalysed reaction is a quinone + NADH + 5 H(+)(in) = a quinol + NAD(+) + 4 H(+)(out). NDH-1 shuttles electrons from NADH, via FMN and iron-sulfur (Fe-S) centers, to quinones in the respiratory chain. The immediate electron acceptor for the enzyme in this species is believed to be a menaquinone. Couples the redox reaction to proton translocation (for every two electrons transferred, four hydrogen ions are translocated across the cytoplasmic membrane), and thus conserves the redox energy in a proton gradient. This is NADH-quinone oxidoreductase subunit A from Pelodictyon phaeoclathratiforme (strain DSM 5477 / BU-1).